The chain runs to 201 residues: 3-isopropylmalate dehydratase small subunit (201 aa).

Belongs to the LeuD family. LeuD type 1 subfamily. In terms of assembly, heterodimer of LeuC and LeuD.

It catalyses the reaction (2R,3S)-3-isopropylmalate = (2S)-2-isopropylmalate. The protein operates within amino-acid biosynthesis; L-leucine biosynthesis; L-leucine from 3-methyl-2-oxobutanoate: step 2/4. Functionally, catalyzes the isomerization between 2-isopropylmalate and 3-isopropylmalate, via the formation of 2-isopropylmaleate. This is 3-isopropylmalate dehydratase small subunit from Sinorhizobium medicae (strain WSM419) (Ensifer medicae).